The chain runs to 347 residues: Heat-inducible transcription repressor HrcA (347 aa).

Belongs to the HrcA family.

Its function is as follows. Negative regulator of class I heat shock genes (grpE-dnaK-dnaJ and groELS operons). Prevents heat-shock induction of these operons. The polypeptide is Heat-inducible transcription repressor HrcA (Mycoplasmopsis pulmonis (strain UAB CTIP) (Mycoplasma pulmonis)).